The chain runs to 586 residues: Probable transporter AQR1 (586 aa).

Disordered regions lie at residues 1 to 44 (MSRS…FEGA) and 61 to 82 (EGDLDSETSSHSSDDKVDPTQQ). Over 1–99 (MSRSNSIYTE…PYTLLSYGQK (99 aa)) the chain is Extracellular. The segment covering 19-40 (NEQHLTREYTKPDGQTKSEKLN) has biased composition (basic and acidic residues). A helical membrane pass occupies residues 100–120 (WGMVAILTMCGFWSSLGSPIY). Residues 121–139 (YPALRQLEKQFNVDENMVN) are Cytoplasmic-facing. Residues 140–160 (VTVVVYLLFQGISPTVSGGLA) form a helical membrane-spanning segment. Over 161–166 (DCFGRR) the chain is Extracellular. A helical transmembrane segment spans residues 167-187 (PIILAGMLIYVIASIGLACAP). A topological domain (cytoplasmic) is located at residue S188. The chain crosses the membrane as a helical span at residues 189–209 (YGVIIFLRCIQSIGISPTIAI). Topologically, residues 210 to 225 (SSGVVGDFTLKHERGT) are extracellular. Residues 226–246 (FVGATSGFVLLGQCFGSLIGA) form a helical membrane-spanning segment. At 247 to 255 (VLTARWDWR) the chain is on the cytoplasmic side. Residues 256-276 (AIFWFLTIGCGSCFLIAFLIL) form a helical membrane-spanning segment. The Extracellular portion of the chain corresponds to 277–334 (PETKRTIAGNLSIKPKRFINRAPIFLLGPVRRRFKYDNPDYETLDPTIPKLDLSSAGK). The chain crosses the membrane as a helical span at residues 335–355 (ILVLPEIILSLFPSGLLFAMW). Topologically, residues 356 to 374 (TLMLSSISSGLSVAPYNYH) are cytoplasmic. Residues 375 to 395 (LVIIGVCYLPGGIGGLMGSFF) traverse the membrane as a helical segment. At 396-433 (TGRIIDMYFKRKIKKFEQDKANGLIPQDAEINMFKVRL) the chain is on the extracellular side. Residues 434–454 (VCLLPQNFLAVVAYLLFGWSI) form a helical membrane-spanning segment. Residues 455–459 (DKGWR) lie on the Cytoplasmic side of the membrane. A helical transmembrane segment spans residues 460–480 (IESILITSFVCSYCAMSTLST). Over 481 to 523 (STTLLVDLYPTKSSTASSCFNFVRCSLSTIFMGCFAKMKAAMT) the chain is Extracellular. A helical transmembrane segment spans residues 524-544 (VGGTFTFLCALVFFFNFLMFI). Over 545–586 (PMKYGMKWREDRLLKQQRQSWLNTLAVKAKKGTKRDQNDNHN) the chain is Cytoplasmic.

This sequence belongs to the major facilitator superfamily. CAR1 family.

The protein resides in the membrane. Functionally, probable transporter that confers resistance to short-chain monocarboxylic acids and quinidine. The protein is Probable transporter AQR1 (AQR1) of Saccharomyces cerevisiae (strain ATCC 204508 / S288c) (Baker's yeast).